Reading from the N-terminus, the 959-residue chain is Probable transport protein MmpL4 (959 aa).

11 consecutive transmembrane segments (helical) span residues 25–45 (FAVPIILVWLAIAVTVSVFIP), 205–225 (VIVILVTLLLVYRSFITVILL), 239–259 (VVALLGHTGLIGLSTFAVNLL), 300–320 (FHVILGSGLTISGATFCLSFA), 333–353 (AVGMLIAVAVALTLGPAVLTV), 381–401 (WPLPILITTCAIAMVGLLALP), 766–786 (WDLVIAGISSLCLIFIIMLII), 790–810 (FVAAAVIVGTVALSLGASFGL), 818–838 (ILGIELHYLVLAMSVIVLLAV), 872–892 (VVTNAGLVFAFTMASMVVSDL), and 902–922 (IGLGLLFDTLIVRSFMMPSIA).

The protein belongs to the resistance-nodulation-cell division (RND) (TC 2.A.6) family. MmpL subfamily.

The protein localises to the cell membrane. The chain is Probable transport protein MmpL4 (mmpL4) from Mycobacterium leprae (strain TN).